The following is a 57-amino-acid chain: uncharacterized protein (57 aa).

Residues 34–54 form a helical membrane-spanning segment; it reads AALLDAAALVVIPGLLTAAAV.

It localises to the membrane. This is an uncharacterized protein from Dictyostelium discoideum (Social amoeba).